A 472-amino-acid chain; its full sequence is 6-phosphogluconate dehydrogenase, decarboxylating (472 aa).

NADP(+)-binding positions include 10 to 15 (GMAVMG), 33 to 35 (NRT), 74 to 76 (VQA), and Asn-102. Substrate contacts are provided by residues Asn-102 and 128–130 (SGG). The active-site Proton acceptor is the Lys-184. Substrate is bound at residue 187–188 (HN). Catalysis depends on Glu-191, which acts as the Proton donor. Residues Tyr-192, Lys-262, Arg-289, Arg-447, and His-453 each coordinate substrate.

The protein belongs to the 6-phosphogluconate dehydrogenase family. Homodimer.

The enzyme catalyses 6-phospho-D-gluconate + NADP(+) = D-ribulose 5-phosphate + CO2 + NADPH. It functions in the pathway carbohydrate degradation; pentose phosphate pathway; D-ribulose 5-phosphate from D-glucose 6-phosphate (oxidative stage): step 3/3. Catalyzes the oxidative decarboxylation of 6-phosphogluconate to ribulose 5-phosphate and CO(2), with concomitant reduction of NADP to NADPH. The protein is 6-phosphogluconate dehydrogenase, decarboxylating (gnd) of Lactococcus lactis subsp. lactis (strain IL1403) (Streptococcus lactis).